Here is a 446-residue protein sequence, read N- to C-terminus: Minor teichoic acid biosynthesis protein GgaA (446 aa).

The protein belongs to the glycosyltransferase 2 family.

It participates in cell wall biogenesis; poly(glucopyranosyl N-acetylgalactosamine 1-phosphate) teichoic acid biosynthesis. Functionally, involved in the biosynthesis of galactosamine-containing minor teichoic acid, a non-essential cell wall polymer in B.subtilis 168. This Bacillus subtilis (strain 168) protein is Minor teichoic acid biosynthesis protein GgaA (ggaA).